The chain runs to 299 residues: Leucine zipper transcription factor-like protein 1 (299 aa).

A coiled-coil region spans residues 96–296; it reads LKLQTDISEL…DLRKRLAQYE (201 aa). An interaction with BSS9 region spans residues 145–299; it reads GTAELLNKEI…KRLAQYEPED (155 aa).

It belongs to the LZTFL1 family. Self-associates. Interacts with BBS9; the interaction mediates the association of LZTL1 with the BBsome complex and regulates BBSome ciliary trafficking.

The protein resides in the cytoplasm. In terms of biological role, regulates ciliary localization of the BBSome complex. Together with the BBSome complex, controls SMO ciliary trafficking and contributes to the sonic hedgehog (SHH) pathway regulation. May play a role in neurite outgrowth. May have tumor suppressor function. This Pongo abelii (Sumatran orangutan) protein is Leucine zipper transcription factor-like protein 1 (LZTFL1).